Reading from the N-terminus, the 106-residue chain is Large ribosomal subunit protein bL21 (106 aa).

The protein belongs to the bacterial ribosomal protein bL21 family. As to quaternary structure, part of the 50S ribosomal subunit. Contacts protein L20.

Functionally, this protein binds to 23S rRNA in the presence of protein L20. This chain is Large ribosomal subunit protein bL21, found in Thermosipho africanus (strain TCF52B).